We begin with the raw amino-acid sequence, 215 residues long: Cytochrome b6 (215 aa).

The chain crosses the membrane as a helical span at residues isoleucine 32 to phenylalanine 52. Residue cysteine 35 participates in heme c binding. Residues histidine 86 and histidine 100 each coordinate heme b. 3 helical membrane-spanning segments follow: residues alanine 90 to phenylalanine 110, leucine 116 to tyrosine 136, and leucine 186 to isoleucine 206. Residues histidine 187 and histidine 202 each contribute to the heme b site.

Belongs to the cytochrome b family. PetB subfamily. As to quaternary structure, the 4 large subunits of the cytochrome b6-f complex are cytochrome b6, subunit IV (17 kDa polypeptide, PetD), cytochrome f and the Rieske protein, while the 4 small subunits are PetG, PetL, PetM and PetN. The complex functions as a dimer. The cofactor is heme b. Heme c is required as a cofactor.

Its subcellular location is the plastid. The protein resides in the chloroplast thylakoid membrane. Functionally, component of the cytochrome b6-f complex, which mediates electron transfer between photosystem II (PSII) and photosystem I (PSI), cyclic electron flow around PSI, and state transitions. The protein is Cytochrome b6 of Vitis vinifera (Grape).